Consider the following 147-residue polypeptide: AP-2 complex subunit sigma (147 aa).

It belongs to the adaptor complexes small subunit family. In terms of assembly, adaptor protein complex 2 (AP-2) is a heterotetramer composed of two large adaptins (alpha-type subunit APL3 and beta-type subunit APL1), a medium chain (mu-type subunit APM4) and a small adaptin (sigma-type subunit APS2). Interacts with APL1.

The protein resides in the cell membrane. Its subcellular location is the membrane. It is found in the coated pit. Its function is as follows. Component of the adaptor complexes which link clathrin to receptors in coated vesicles. Clathrin-associated protein complexes are believed to interact with the cytoplasmic tails of membrane proteins, leading to their selection and concentration. The sequence is that of AP-2 complex subunit sigma (APS2) from Saccharomyces cerevisiae (strain ATCC 204508 / S288c) (Baker's yeast).